The chain runs to 427 residues: Glutamate-1-semialdehyde 2,1-aminomutase (427 aa).

K265 is subject to N6-(pyridoxal phosphate)lysine.

The protein belongs to the class-III pyridoxal-phosphate-dependent aminotransferase family. HemL subfamily. As to quaternary structure, homodimer. The cofactor is pyridoxal 5'-phosphate.

Its subcellular location is the cytoplasm. It carries out the reaction (S)-4-amino-5-oxopentanoate = 5-aminolevulinate. Its pathway is porphyrin-containing compound metabolism; protoporphyrin-IX biosynthesis; 5-aminolevulinate from L-glutamyl-tRNA(Glu): step 2/2. The protein is Glutamate-1-semialdehyde 2,1-aminomutase of Bordetella pertussis (strain Tohama I / ATCC BAA-589 / NCTC 13251).